Consider the following 268-residue polypeptide: Tryptophan synthase alpha chain (268 aa).

Residues E49 and D60 each act as proton acceptor in the active site.

The protein belongs to the TrpA family. Tetramer of two alpha and two beta chains.

The catalysed reaction is (1S,2R)-1-C-(indol-3-yl)glycerol 3-phosphate + L-serine = D-glyceraldehyde 3-phosphate + L-tryptophan + H2O. It functions in the pathway amino-acid biosynthesis; L-tryptophan biosynthesis; L-tryptophan from chorismate: step 5/5. Its function is as follows. The alpha subunit is responsible for the aldol cleavage of indoleglycerol phosphate to indole and glyceraldehyde 3-phosphate. This is Tryptophan synthase alpha chain from Salmonella agona (strain SL483).